We begin with the raw amino-acid sequence, 291 residues long: 4-diphosphocytidyl-2-C-methyl-D-erythritol kinase (291 aa).

The active site involves lysine 21. ATP is bound at residue 104-114 (PMGGGLGGGSS). Aspartate 146 is a catalytic residue.

Belongs to the GHMP kinase family. IspE subfamily.

It catalyses the reaction 4-CDP-2-C-methyl-D-erythritol + ATP = 4-CDP-2-C-methyl-D-erythritol 2-phosphate + ADP + H(+). It participates in isoprenoid biosynthesis; isopentenyl diphosphate biosynthesis via DXP pathway; isopentenyl diphosphate from 1-deoxy-D-xylulose 5-phosphate: step 3/6. Catalyzes the phosphorylation of the position 2 hydroxy group of 4-diphosphocytidyl-2C-methyl-D-erythritol. The sequence is that of 4-diphosphocytidyl-2-C-methyl-D-erythritol kinase from Methylococcus capsulatus (strain ATCC 33009 / NCIMB 11132 / Bath).